The chain runs to 510 residues: NAD(P)H-quinone oxidoreductase subunit 2 A, chloroplastic (510 aa).

The next 12 helical transmembrane spans lie at 24-44 (LLLFNGSFIFPECILIFGLIL), 59-79 (WFYFISSTCLVISITALLFRW), 99-119 (IFQFLILLCSTLCIPLSVEYI), 124-144 (MAITEFLLFVLTATLGGMFLC), 149-169 (LITIFVAPECFSLCSYLLSGY), 183-203 (YLLMGGAGSSILVHGFSWLYG), 229-249 (ISLALISITVGLGFKLSPAPF), 295-315 (WHLLLEILAILSMILGNLLAI), 323-343 (MLAYSSIGQIGYVIIGIIVGD), 354-374 (YMLFYISMNLGTFACIVLFGL), 395-415 (ALSLALCLLSLGGLPPLAGFF), and 418-438 (LYLFWCGWQAGLYFLVSIGLL).

Belongs to the complex I subunit 2 family. NDH is composed of at least 16 different subunits, 5 of which are encoded in the nucleus.

It localises to the plastid. Its subcellular location is the chloroplast thylakoid membrane. The catalysed reaction is a plastoquinone + NADH + (n+1) H(+)(in) = a plastoquinol + NAD(+) + n H(+)(out). It catalyses the reaction a plastoquinone + NADPH + (n+1) H(+)(in) = a plastoquinol + NADP(+) + n H(+)(out). In terms of biological role, NDH shuttles electrons from NAD(P)H:plastoquinone, via FMN and iron-sulfur (Fe-S) centers, to quinones in the photosynthetic chain and possibly in a chloroplast respiratory chain. The immediate electron acceptor for the enzyme in this species is believed to be plastoquinone. Couples the redox reaction to proton translocation, and thus conserves the redox energy in a proton gradient. The sequence is that of NAD(P)H-quinone oxidoreductase subunit 2 A, chloroplastic from Triticum aestivum (Wheat).